The following is a 397-amino-acid chain: Lymphoid enhancer-binding factor 1 (397 aa).

A CTNNB1-binding region spans residues 1–60 (MPQLSGGGGGGDPELCATDEMIPFKDEGDPQKEKIFAEISHPEEEGDLADIKSSLVNESE). A Glycyl lysine isopeptide (Lys-Gly) (interchain with G-Cter in SUMO) cross-link involves residue Lys-25. Residues 59–102 (SEIIPASNGHEVVRQAPSSQEPYHDKAREHPDEGKHPDGGLYNK) form a disordered region. Residues 80–96 (PYHDKAREHPDEGKHPD) are compositionally biased toward basic and acidic residues. Ser-130 is modified (phosphoserine). Phosphothreonine; by NLK is present on Thr-153. A Phosphoserine; by NLK modification is found at Ser-164. 2 disordered regions span residues 164–191 (SPGS…APEI) and 266–296 (VKQE…KRPH). Residue Lys-267 forms a Glycyl lysine isopeptide (Lys-Gly) (interchain with G-Cter in SUMO) linkage. A compositionally biased stretch (basic and acidic residues) spans 267–294 (KQEHPHTDSDLMHVKPQHEQRKEQEPKR). Positions 297-365 (IKKPLNAFML…LHMQLYPGWS (69 aa)) form a DNA-binding region, HMG box. Residues 367–397 (RDNYGKKKKRKREKLQESTSGTGPRMTAAYI) form a disordered region.

This sequence belongs to the TCF/LEF family. Binds the armadillo repeat of CTNNB1 and forms a stable complex. Binds TLE1, ALYREF/THOC4, MDFI and MDFIC. Interacts with NLK. Interacts with EP300 and PIASG. Interacts with DAZAP2. Post-translationally, phosphorylated at Thr-153 and/or Ser-164 by NLK. Phosphorylation by NLK at these sites represses LEF1-mediated transcriptional activation of target genes of the canonical Wnt signaling pathway. As to expression, expressed in Vgamma1.1 and Vgamma2 gamma-delta T-cells, however not expressed in gamma-delta thymocytes fated for Il17a expression (at protein level). Expressed in alpha-beta T-cell lineages. Expressed in the thymus. Found in distinct epithelial cell compartments of the skin and is abundant in the hair-producing progenitors of the follicle.

The protein localises to the nucleus. Transcription factor that binds DNA in a sequence-specific manner. Participates in the Wnt signaling pathway. Activates transcription of target genes in the presence of CTNNB1 and EP300. PIASG antagonizes both Wnt-dependent and Wnt-independent activation by LEF1. TLE1, TLE2, TLE3 and TLE4 repress transactivation mediated by LEF1 and CTNNB1. Regulates T-cell receptor alpha enhancer function. Required for IL17A expressing gamma-delta T-cell maturation and development, via binding to regulator loci of BLK to modulate expression. Acts as a positive regulator of odontoblast differentiation during mesenchymal tooth germ formation, expression is repressed during the bell stage by MSX1-mediated inhibition of CTNNB1 signaling. May play a role in hair cell differentiation and follicle morphogenesis. This is Lymphoid enhancer-binding factor 1 from Mus musculus (Mouse).